The sequence spans 262 residues: Probable carboxylesterase Culp3 (262 aa).

A signal peptide spans 1–41 (MNNRPIRLLTSGRAGLGAGALITAVVLLIALGAVWTPVAFA). The cysteines at positions 44 and 114 are disulfide-linked. Ser-125 serves as the catalytic Nucleophile. A disulfide bridge links Cys-188 with Cys-195. The active site involves Asp-192. The active-site Proton donor/acceptor is the His-206. The interval 241–262 (LPGSVLQMPGTAAPAPESLHGR) is disordered.

The protein belongs to the cutinase family.

Its subcellular location is the secreted. In terms of biological role, shows weak esterase activity with the p-nitrophenol-linked aliphatic ester pNP-butyrate. Does not exhibit cutinase activity. The protein is Probable carboxylesterase Culp3 (cut3) of Mycobacterium tuberculosis (strain ATCC 25618 / H37Rv).